We begin with the raw amino-acid sequence, 96 residues long: Large ribosomal subunit protein eL43 (96 aa).

The C4-type zinc finger occupies 41–62 (CPVCAFPKLKRVGTSIWVCDKC).

It belongs to the eukaryotic ribosomal protein eL43 family. The cofactor is Zn(2+).

The protein is Large ribosomal subunit protein eL43 of Methanococcus maripaludis (strain C6 / ATCC BAA-1332).